The following is a 224-amino-acid chain: 7-cyano-7-deazaguanine synthase (224 aa).

10–20 (LSGGLDSATVA) is an ATP binding site. Zn(2+)-binding residues include C189, C199, C202, and C205.

Belongs to the QueC family. It depends on Zn(2+) as a cofactor.

It carries out the reaction 7-carboxy-7-deazaguanine + NH4(+) + ATP = 7-cyano-7-deazaguanine + ADP + phosphate + H2O + H(+). It functions in the pathway purine metabolism; 7-cyano-7-deazaguanine biosynthesis. Functionally, catalyzes the ATP-dependent conversion of 7-carboxy-7-deazaguanine (CDG) to 7-cyano-7-deazaguanine (preQ(0)). The sequence is that of 7-cyano-7-deazaguanine synthase from Azotobacter vinelandii (strain DJ / ATCC BAA-1303).